We begin with the raw amino-acid sequence, 125 residues long: Large ribosomal subunit protein bL12 (125 aa).

Belongs to the bacterial ribosomal protein bL12 family. In terms of assembly, homodimer. Part of the ribosomal stalk of the 50S ribosomal subunit. Forms a multimeric L10(L12)X complex, where L10 forms an elongated spine to which 2 to 4 L12 dimers bind in a sequential fashion. Binds GTP-bound translation factors.

In terms of biological role, forms part of the ribosomal stalk which helps the ribosome interact with GTP-bound translation factors. Is thus essential for accurate translation. In Rickettsia africae (strain ESF-5), this protein is Large ribosomal subunit protein bL12.